The following is a 663-amino-acid chain: UvrABC system protein B (663 aa).

In terms of domain architecture, Helicase ATP-binding spans 31–418 (DNIEGGEKAQ…TDTVVEQIIR (388 aa)). 44-51 (GATGTGKT) serves as a coordination point for ATP. Positions 97–120 (YYDYYQPEAYVPSSDTYIEKDSSV) match the Beta-hairpin motif. The 167-residue stretch at 435-601 (QMDDLLGEIN…TIKKEIRDLI (167 aa)) folds into the Helicase C-terminal domain. The UVR domain occupies 627–662 (QAEIKALQKQMQEAAELLDFELAAQIRDVILKLKAI).

It belongs to the UvrB family. In terms of assembly, forms a heterotetramer with UvrA during the search for lesions. Interacts with UvrC in an incision complex.

The protein localises to the cytoplasm. The UvrABC repair system catalyzes the recognition and processing of DNA lesions. A damage recognition complex composed of 2 UvrA and 2 UvrB subunits scans DNA for abnormalities. Upon binding of the UvrA(2)B(2) complex to a putative damaged site, the DNA wraps around one UvrB monomer. DNA wrap is dependent on ATP binding by UvrB and probably causes local melting of the DNA helix, facilitating insertion of UvrB beta-hairpin between the DNA strands. Then UvrB probes one DNA strand for the presence of a lesion. If a lesion is found the UvrA subunits dissociate and the UvrB-DNA preincision complex is formed. This complex is subsequently bound by UvrC and the second UvrB is released. If no lesion is found, the DNA wraps around the other UvrB subunit that will check the other stand for damage. This chain is UvrABC system protein B, found in Streptococcus agalactiae serotype Ia (strain ATCC 27591 / A909 / CDC SS700).